Reading from the N-terminus, the 288-residue chain is Polyamine aminopropyltransferase (288 aa).

Residues 9–238 (ETLHDQFGQY…GIMTFAWATD (230 aa)) enclose the PABS domain. Gln-33 contacts S-methyl-5'-thioadenosine. Spermidine-binding residues include His-64 and Asp-88. Residues Glu-108 and 140-141 (DG) each bind S-methyl-5'-thioadenosine. The active-site Proton acceptor is Asp-158. Spermidine is bound at residue 158-161 (DCTD). S-methyl-5'-thioadenosine is bound at residue Pro-165.

The protein belongs to the spermidine/spermine synthase family. In terms of assembly, homodimer or homotetramer.

It localises to the cytoplasm. The catalysed reaction is S-adenosyl 3-(methylsulfanyl)propylamine + putrescine = S-methyl-5'-thioadenosine + spermidine + H(+). It participates in amine and polyamine biosynthesis; spermidine biosynthesis; spermidine from putrescine: step 1/1. Its function is as follows. Catalyzes the irreversible transfer of a propylamine group from the amino donor S-adenosylmethioninamine (decarboxy-AdoMet) to putrescine (1,4-diaminobutane) to yield spermidine. This Escherichia coli (strain ATCC 8739 / DSM 1576 / NBRC 3972 / NCIMB 8545 / WDCM 00012 / Crooks) protein is Polyamine aminopropyltransferase.